The primary structure comprises 253 residues: Uracil-DNA glycosylase (253 aa).

Asp79 functions as the Proton acceptor in the catalytic mechanism.

Belongs to the uracil-DNA glycosylase (UDG) superfamily. UNG family.

It localises to the cytoplasm. The enzyme catalyses Hydrolyzes single-stranded DNA or mismatched double-stranded DNA and polynucleotides, releasing free uracil.. In terms of biological role, excises uracil residues from the DNA which can arise as a result of misincorporation of dUMP residues by DNA polymerase or due to deamination of cytosine. The polypeptide is Uracil-DNA glycosylase (Xylella fastidiosa (strain M23)).